The following is a 430-amino-acid chain: Sphingosine-1-phosphate phosphatase 1 (430 aa).

Positions 34 to 103 (SSPAADEDAE…AGSQRRNSLT (70 aa)) are disordered. Position 101 is a phosphoserine (S101). T103 is modified (phosphothreonine). 4 consecutive transmembrane segments (helical) span residues 121–141 (FCLGTELGNELFYILFFPFWI), 152–172 (LVIIWVLVMYLGQCTKDIIRW), 193–213 (MPSTHAMSGTAIPIAMFLLTY), and 216–236 (WQYPLIYGLILIPCWSSLVCL). The segment at 167–175 (KDIIRWPRP) is phosphatase sequence motif I. The phosphatase sequence motif II stretch occupies residues 194-197 (PSTH). H197 functions as the Proton donor in the catalytic mechanism. Positions 237–248 (SRIYMGMHSILD) are phosphatase sequence motif III. H244 acts as the Nucleophile in catalysis. Transmembrane regions (helical) follow at residues 246–266 (ILDVIAGFLYTILILIIFYPL), 279–299 (YAPLIIIGLHLILGIFSFTLD), 311–331 (ILGSGAGIACGSHAAYTLGLS), 348–368 (VTLFGKAILRIVLGMLLVLFV), and 409–429 (YGMVGFSITFLVPYVFSFIGI).

This sequence belongs to the type 2 lipid phosphate phosphatase family. Highly expressed in liver and kidney. Expressed in epidermis, in the stratum granulosum and the stratum spinosum.

It localises to the endoplasmic reticulum membrane. The protein resides in the cell membrane. It carries out the reaction sphinganine 1-phosphate + H2O = sphinganine + phosphate. The enzyme catalyses sphing-4-enine 1-phosphate + H2O = sphing-4-enine + phosphate. Inhibited by NaF, sodium orthovanadate, propanolol, and N-ethylmaleimide. Specifically dephosphorylates sphingosine 1-phosphate (S1P), dihydro-S1P, and phyto-S1P. Does not act on ceramide 1-phosphate, lysophosphatidic acid or phosphatidic acid. Sphingosine-1-phosphate phosphatase activity is needed for efficient recycling of sphingosine into the sphingolipid synthesis pathway. Regulates the intracellular levels of the bioactive sphingolipid metabolite S1P that regulates diverse biological processes acting both as an extracellular receptor ligand or as an intracellular second messenger. Involved in efficient ceramide synthesis from exogenous sphingoid bases. Converts S1P to sphingosine, which is readily metabolized to ceramide via ceramide synthase. In concert with sphingosine kinase 2 (SphK2), recycles sphingosine into ceramide through a phosphorylation/dephosphorylation cycle. Regulates endoplasmic-to-Golgi trafficking of ceramides, resulting in the regulation of ceramide levels in the endoplasmic reticulum, preferentially long-chain ceramide species, and influences the anterograde membrane transport of both ceramide and proteins from the endoplasmic reticulum to the Golgi apparatus. The modulation of intracellular ceramide levels in turn regulates apoptosis. Via S1P levels, modulates resting tone, intracellular Ca(2+) and myogenic vasoconstriction in resistance arteries. Also involved in unfolded protein response (UPR) and ER stress-induced autophagy via regulation of intracellular S1P levels. Involved in the regulation of epidermal homeostasis and keratinocyte differentiation. In Mus musculus (Mouse), this protein is Sphingosine-1-phosphate phosphatase 1.